Reading from the N-terminus, the 310-residue chain is tRNA dimethylallyltransferase (310 aa).

24–31 serves as a coordination point for ATP; sequence GPTASGKT. A substrate-binding site is contributed by 26 to 31; sequence TASGKT. The tract at residues 49–52 is interaction with substrate tRNA; that stretch reads DSRQ.

It belongs to the IPP transferase family. In terms of assembly, monomer. It depends on Mg(2+) as a cofactor.

It catalyses the reaction adenosine(37) in tRNA + dimethylallyl diphosphate = N(6)-dimethylallyladenosine(37) in tRNA + diphosphate. Catalyzes the transfer of a dimethylallyl group onto the adenine at position 37 in tRNAs that read codons beginning with uridine, leading to the formation of N6-(dimethylallyl)adenosine (i(6)A). The protein is tRNA dimethylallyltransferase of Synechococcus sp. (strain CC9311).